A 184-amino-acid chain; its full sequence is Probable RNA 2'-phosphotransferase (184 aa).

It belongs to the KptA/TPT1 family.

Its function is as follows. Removes the 2'-phosphate from RNA via an intermediate in which the phosphate is ADP-ribosylated by NAD followed by a presumed transesterification to release the RNA and generate ADP-ribose 1''-2''-cyclic phosphate (APPR&gt;P). May function as an ADP-ribosylase. In Escherichia coli O8 (strain IAI1), this protein is Probable RNA 2'-phosphotransferase.